A 201-amino-acid polypeptide reads, in one-letter code: Small ribosomal subunit protein uS10m (201 aa).

This sequence belongs to the universal ribosomal protein uS10 family. As to quaternary structure, component of the mitochondrial ribosome small subunit (28S) which comprises a 12S rRNA and about 30 distinct proteins.

It is found in the mitochondrion. This Pongo abelii (Sumatran orangutan) protein is Small ribosomal subunit protein uS10m (MRPS10).